The sequence spans 311 residues: LOB domain-containing protein 10 (311 aa).

The region spanning 4–105 is the LOB domain; that stretch reads TPCAACKLLR…QDLLTAKEEL (102 aa). A compositionally biased stretch (low complexity) spans 264-277; that stretch reads LQEGQEQTEEGQFL. Residues 264 to 311 form a disordered region; it reads LQEGQEQTEEGQFLMQPMGQENLHDEEEEEELEPPVKWRMSENKEASF. The segment covering 287–296 has biased composition (acidic residues); sequence HDEEEEEELE. Residues 297 to 311 are compositionally biased toward basic and acidic residues; that stretch reads PPVKWRMSENKEASF.

The protein belongs to the LOB domain-containing protein family.

The protein is LOB domain-containing protein 10 (LBD10) of Arabidopsis thaliana (Mouse-ear cress).